Here is a 597-residue protein sequence, read N- to C-terminus: Protein unc-93 homolog B1 (597 aa).

Residues 1 to 29 are disordered; it reads MEAEPPLYPMAGAAGPQGDEDLLGVPDGP. 5 consecutive transmembrane segments (helical) span residues 64-84, 110-130, 132-152, 160-180, and 223-243; these read VLAA…LLQM, KMLM…PVLI, FFGT…FVST, TLVP…ASMG, and IFYS…IYFL. N-linked (GlcNAc...) asparagine glycosylation is found at N251 and N272. The next 5 helical transmembrane spans lie at 285 to 305, 343 to 363, 378 to 398, 403 to 423, and 428 to 448; these read LIVV…LVLG, LVPF…GIAL, LLVA…LGLW, VPLV…FFWA, and VLQH…GSAL. N449 is a glycosylation site (N-linked (GlcNAc...) asparagine). A run of 2 helical transmembrane segments spans residues 469 to 489 and 491 to 511; these read FIFT…YLGS and LHMK…AVSY. The disordered stretch occupies residues 522–597; it reads VAPRQPRIPR…AQGGDGPEEQ (76 aa). Residues S547 and S550 each carry the phosphoserine modification.

Belongs to the unc-93 family. In terms of assembly, interacts with TLR3, TLR5, TLR7, and TLR9 (probably via transmembrane domain). In terms of processing, N-glycosylated. In terms of tissue distribution, expressed in plasmocytoid dendritic cells (at protein level). Highly expressed in antigen-presenting cells. Expressed in heart, and at lower level in kidney. Expressed at low level in other tissues.

The protein localises to the endoplasmic reticulum membrane. It is found in the endosome. The protein resides in the lysosome. Its subcellular location is the cytoplasmic vesicle. It localises to the phagosome. Plays an important role in innate and adaptive immunity by regulating nucleotide-sensing Toll-like receptor (TLR) signaling. Required for the transport of a subset of TLRs (including TLR3, TLR7 and TLR9) from the endoplasmic reticulum to endolysosomes where they can engage pathogen nucleotides and activate signaling cascades. May play a role in autoreactive B-cells removal. This chain is Protein unc-93 homolog B1, found in Homo sapiens (Human).